Here is a 262-residue protein sequence, read N- to C-terminus: Small ribosomal subunit protein eS1 (262 aa).

It belongs to the eukaryotic ribosomal protein eS1 family. In terms of assembly, component of the small ribosomal subunit. Mature ribosomes consist of a small (40S) and a large (60S) subunit. The 40S subunit contains about 33 different proteins and 1 molecule of RNA (18S). The 60S subunit contains about 49 different proteins and 3 molecules of RNA (25S, 5.8S and 5S).

Its subcellular location is the cytoplasm. The chain is Small ribosomal subunit protein eS1 from Cryptosporidium hominis.